Consider the following 89-residue polypeptide: UPF0237 protein Cgl1544/cg1742 (89 aa).

The ACT domain maps to 4–82; the sequence is IMTVTGQDHT…LVIRIQSEAL (79 aa).

Belongs to the UPF0237 family.

This Corynebacterium glutamicum (strain ATCC 13032 / DSM 20300 / JCM 1318 / BCRC 11384 / CCUG 27702 / LMG 3730 / NBRC 12168 / NCIMB 10025 / NRRL B-2784 / 534) protein is UPF0237 protein Cgl1544/cg1742.